Consider the following 194-residue polypeptide: Methyl-CpG-binding domain protein 3-like 1 (194 aa).

Residues 1-104 (MAKSSQRKQR…KLVPSYTGGS (104 aa)) are transcription repressor.

Belongs to the MBD3L family. In terms of tissue distribution, highly expressed in testis. Detected at low levels in pancreas. Not detected in the other tissues tested.

It localises to the nucleus. Functionally, transcriptional repressor. This chain is Methyl-CpG-binding domain protein 3-like 1 (MBD3L1), found in Homo sapiens (Human).